We begin with the raw amino-acid sequence, 420 residues long: Glucose-1-phosphate adenylyltransferase (420 aa).

Residues tyrosine 107, glycine 173, glutamate 188–lysine 189, and serine 206 contribute to the alpha-D-glucose 1-phosphate site.

This sequence belongs to the bacterial/plant glucose-1-phosphate adenylyltransferase family. As to quaternary structure, homotetramer.

It carries out the reaction alpha-D-glucose 1-phosphate + ATP + H(+) = ADP-alpha-D-glucose + diphosphate. Its pathway is glycan biosynthesis; glycogen biosynthesis. Its function is as follows. Involved in the biosynthesis of ADP-glucose, a building block required for the elongation reactions to produce glycogen. Catalyzes the reaction between ATP and alpha-D-glucose 1-phosphate (G1P) to produce pyrophosphate and ADP-Glc. The sequence is that of Glucose-1-phosphate adenylyltransferase from Shewanella sp. (strain W3-18-1).